We begin with the raw amino-acid sequence, 418 residues long: STE20-related kinase adapter protein beta (418 aa).

Residues 58–369 (YELQVEIGRG…ASSLLSHVFF (312 aa)) enclose the Protein kinase domain. Residues 64-72 (IGRGFDNLT) and Lys89 contribute to the ATP site.

The protein belongs to the protein kinase superfamily. STE Ser/Thr protein kinase family. STE20 subfamily. As to quaternary structure, component of a trimeric complex composed of STK11/LKB1, STRAD (STRADA or STRADB) and CAB39/MO25 (CAB39/MO25alpha or CAB39L/MO25beta): the complex tethers STK11/LKB1 in the cytoplasm and stimulates its catalytic activity. Interacts with BIRC4/XIAP. These two proteins are likely to coexist in a complex with TAK1, TRAF6, TAB1 and TAB2. As to expression, highly expressed in heart, skeletal muscle, testis, liver and colon.

Its subcellular location is the nucleus. It localises to the cytoplasm. Its function is as follows. Pseudokinase which, in complex with CAB39/MO25 (CAB39/MO25alpha or CAB39L/MO25beta), binds to and activates STK11/LKB1. Adopts a closed conformation typical of active protein kinases and binds STK11/LKB1 as a pseudosubstrate, promoting conformational change of STK11/LKB1 in an active conformation. The protein is STE20-related kinase adapter protein beta (STRADB) of Homo sapiens (Human).